Consider the following 442-residue polypeptide: Pentatricopeptide repeat-containing protein At2g27800, mitochondrial (442 aa).

The N-terminal 67 residues, 1–67 (MSATRSTFLG…SFLPSIHVRF (67 aa)), are a transit peptide targeting the mitochondrion. PPR repeat units lie at residues 206–236 (NENL…MVTS), 244–286 (TIRT…GIEP), 287–322 (DVFA…DCEP), 323–357 (NSFT…GFVP), 358–392 (NGKS…GRVV), and 393–427 (DFIS…QLVD).

Belongs to the PPR family. P subfamily.

The protein localises to the mitochondrion. This is Pentatricopeptide repeat-containing protein At2g27800, mitochondrial from Arabidopsis thaliana (Mouse-ear cress).